A 219-amino-acid polypeptide reads, in one-letter code: Ribose-5-phosphate isomerase A (219 aa).

Substrate contacts are provided by residues 28 to 31 (SGST), 81 to 84 (DGAD), and 94 to 97 (KGGG). Residue E103 is the Proton acceptor of the active site. A substrate-binding site is contributed by K121.

The protein belongs to the ribose 5-phosphate isomerase family. In terms of assembly, homodimer.

The catalysed reaction is aldehydo-D-ribose 5-phosphate = D-ribulose 5-phosphate. Its pathway is carbohydrate degradation; pentose phosphate pathway; D-ribose 5-phosphate from D-ribulose 5-phosphate (non-oxidative stage): step 1/1. Functionally, catalyzes the reversible conversion of ribose-5-phosphate to ribulose 5-phosphate. This chain is Ribose-5-phosphate isomerase A, found in Actinobacillus succinogenes (strain ATCC 55618 / DSM 22257 / CCUG 43843 / 130Z).